Consider the following 234-residue polypeptide: Leucyl/phenylalanyl-tRNA--protein transferase (234 aa).

The protein belongs to the L/F-transferase family.

The protein resides in the cytoplasm. The catalysed reaction is N-terminal L-lysyl-[protein] + L-leucyl-tRNA(Leu) = N-terminal L-leucyl-L-lysyl-[protein] + tRNA(Leu) + H(+). It catalyses the reaction N-terminal L-arginyl-[protein] + L-leucyl-tRNA(Leu) = N-terminal L-leucyl-L-arginyl-[protein] + tRNA(Leu) + H(+). The enzyme catalyses L-phenylalanyl-tRNA(Phe) + an N-terminal L-alpha-aminoacyl-[protein] = an N-terminal L-phenylalanyl-L-alpha-aminoacyl-[protein] + tRNA(Phe). Functions in the N-end rule pathway of protein degradation where it conjugates Leu, Phe and, less efficiently, Met from aminoacyl-tRNAs to the N-termini of proteins containing an N-terminal arginine or lysine. This Shigella boydii serotype 18 (strain CDC 3083-94 / BS512) protein is Leucyl/phenylalanyl-tRNA--protein transferase.